We begin with the raw amino-acid sequence, 143 residues long: 3-hydroxyacyl-[acyl-carrier-protein] dehydratase FabZ (143 aa).

His49 is an active-site residue.

The protein belongs to the thioester dehydratase family. FabZ subfamily.

It localises to the cytoplasm. The catalysed reaction is a (3R)-hydroxyacyl-[ACP] = a (2E)-enoyl-[ACP] + H2O. Functionally, involved in unsaturated fatty acids biosynthesis. Catalyzes the dehydration of short chain beta-hydroxyacyl-ACPs and long chain saturated and unsaturated beta-hydroxyacyl-ACPs. This chain is 3-hydroxyacyl-[acyl-carrier-protein] dehydratase FabZ, found in Wolbachia sp. subsp. Drosophila simulans (strain wRi).